The chain runs to 426 residues: mRNA cap guanine-N(7) methyltransferase (426 aa).

Residues 138 to 421 enclose the mRNA cap 0 methyltransferase domain; the sequence is SPIIKLRNFN…FYTTFAFRKV (284 aa). Residue 147 to 148 participates in mRNA binding; the sequence is NN. S-adenosyl-L-methionine is bound by residues K151, A169, D191, D220, Q246, and Y251.

This sequence belongs to the class I-like SAM-binding methyltransferase superfamily. mRNA cap 0 methyltransferase family.

The protein localises to the nucleus. The catalysed reaction is a 5'-end (5'-triphosphoguanosine)-ribonucleoside in mRNA + S-adenosyl-L-methionine = a 5'-end (N(7)-methyl 5'-triphosphoguanosine)-ribonucleoside in mRNA + S-adenosyl-L-homocysteine. Functionally, responsible for methylating the 5'-cap structure of mRNAs. The polypeptide is mRNA cap guanine-N(7) methyltransferase (ABD1) (Kluyveromyces lactis (strain ATCC 8585 / CBS 2359 / DSM 70799 / NBRC 1267 / NRRL Y-1140 / WM37) (Yeast)).